The chain runs to 341 residues: Diguanylate cyclase DgcP (341 aa).

The region spanning 18 to 154 (SLESLVRQLL…LFAGLIAQYI (137 aa)) is the GAF domain. The GGDEF domain occupies 204–337 (HKIMIAFIDL…KQKTPFVAHP (134 aa)). Mg(2+) is bound at residue aspartate 212. Asparagine 220, histidine 225, and aspartate 229 together coordinate substrate. Residue aspartate 255 coordinates Mg(2+). Aspartate 255 (proton acceptor) is an active-site residue.

Homodimer. Mg(2+) is required as a cofactor.

The enzyme catalyses 2 GTP = 3',3'-c-di-GMP + 2 diphosphate. Its pathway is purine metabolism; 3',5'-cyclic di-GMP biosynthesis. Its function is as follows. Catalyzes the synthesis of cyclic-di-GMP (c-di-GMP) via the condensation of 2 GTP molecules. Cyclic-di-GMP is a second messenger which controls cell surface-associated traits in bacteria. This is Diguanylate cyclase DgcP from Escherichia coli (strain K12).